A 274-amino-acid polypeptide reads, in one-letter code: Small ribosomal subunit protein uS2 (274 aa).

The disordered stretch occupies residues 255-274 (AEAESEDKGEVLYSFDDEEE).

Belongs to the universal ribosomal protein uS2 family.

This Gloeobacter violaceus (strain ATCC 29082 / PCC 7421) protein is Small ribosomal subunit protein uS2.